The sequence spans 341 residues: tRNA N6-adenosine threonylcarbamoyltransferase (341 aa).

Fe cation contacts are provided by His-120 and His-124. Substrate is bound by residues 142–146 (VVSGG), Asp-175, Gly-188, Asp-192, and Asn-281. Fe cation is bound at residue Asp-310.

Belongs to the KAE1 / TsaD family. It depends on Fe(2+) as a cofactor.

Its subcellular location is the cytoplasm. The catalysed reaction is L-threonylcarbamoyladenylate + adenosine(37) in tRNA = N(6)-L-threonylcarbamoyladenosine(37) in tRNA + AMP + H(+). Required for the formation of a threonylcarbamoyl group on adenosine at position 37 (t(6)A37) in tRNAs that read codons beginning with adenine. Is involved in the transfer of the threonylcarbamoyl moiety of threonylcarbamoyl-AMP (TC-AMP) to the N6 group of A37, together with TsaE and TsaB. TsaD likely plays a direct catalytic role in this reaction. This chain is tRNA N6-adenosine threonylcarbamoyltransferase, found in Anoxybacillus flavithermus (strain DSM 21510 / WK1).